A 435-amino-acid chain; its full sequence is Nematode resistance protein-like HSPRO2 (435 aa).

As to quaternary structure, interacts with SNF4.

It is found in the cytoplasm. Functionally, positive regulator of basal resistance. The polypeptide is Nematode resistance protein-like HSPRO2 (HSPRO2) (Arabidopsis thaliana (Mouse-ear cress)).